A 208-amino-acid chain; its full sequence is Uracil phosphoribosyltransferase (208 aa).

Residues Arg77, Arg102, and 129–137 (DPMLATGNS) each bind 5-phospho-alpha-D-ribose 1-diphosphate. Residues Ile193 and 198 to 200 (GDA) contribute to the uracil site. Residue Asp199 participates in 5-phospho-alpha-D-ribose 1-diphosphate binding.

The protein belongs to the UPRTase family. Requires Mg(2+) as cofactor.

The catalysed reaction is UMP + diphosphate = 5-phospho-alpha-D-ribose 1-diphosphate + uracil. It functions in the pathway pyrimidine metabolism; UMP biosynthesis via salvage pathway; UMP from uracil: step 1/1. Allosterically activated by GTP. Its function is as follows. Catalyzes the conversion of uracil and 5-phospho-alpha-D-ribose 1-diphosphate (PRPP) to UMP and diphosphate. The protein is Uracil phosphoribosyltransferase of Mycoplasmopsis pulmonis (strain UAB CTIP) (Mycoplasma pulmonis).